The sequence spans 289 residues: Protoheme IX farnesyltransferase 2 (289 aa).

Helical transmembrane passes span 4-24 (PGII…AAKG), 28-48 (LVLM…GCAI), 66-86 (RVTV…LALG), 99-118 (ALAL…VYSL), 124-144 (SVYG…VGYC), 155-175 (AILL…IAIF), 199-219 (LHIV…PLAG), 221-241 (TGIA…AMAL), and 256-276 (QVFG…ALDF).

This sequence belongs to the UbiA prenyltransferase family. Protoheme IX farnesyltransferase subfamily.

It localises to the cell inner membrane. The enzyme catalyses heme b + (2E,6E)-farnesyl diphosphate + H2O = Fe(II)-heme o + diphosphate. It participates in porphyrin-containing compound metabolism; heme O biosynthesis; heme O from protoheme: step 1/1. Its function is as follows. Converts heme B (protoheme IX) to heme O by substitution of the vinyl group on carbon 2 of heme B porphyrin ring with a hydroxyethyl farnesyl side group. The chain is Protoheme IX farnesyltransferase 2 from Shewanella baltica (strain OS195).